Reading from the N-terminus, the 1015-residue chain is MAHIYRLLLLLLSNLWFSTAAQNQSETEWPLHDNGLSKVVQWDHYSFQVNGQRIFIFSGEFHYWRIPVPELWRDILEKVKATGFTAFAFYSSWAYHAPNNSTVDFSTGARDITPIFELAKELGMYMIVRPGPYVNAEASAGGFPLWLMTGEYGSLRNDDPRYTAAWTPYFANMSQITSKYQVTDGHNTLVYQIENEYGQQWIGDPKNRNPNKTAVAYMELLEASARENGITVPLTSNDPNMNSKSWGSDWSNAGGNVDVAGLDSYPSCWTCDVSQCTSTNGEYVPYKVIDYYDYFQEVQPTLPSFMPEFQGGSYNPWAGPEGGCPQDTSAEFANLFYRWNIGQRVTAMSLYMLYGGTNWGAIAAPVTATSYDYSAPISEDRSIGAKYSETKLLALFTRTAKDLTMTEAIGNGTQYTTNTAVRAFELRNPQTNAGFYVTFHTDTTVGGNQAFKLHVNTSVGALTVPKNEGLIQLNGHQSKIIVTDFTLGKRTLLYSTAEVLTYAVFENRPTLVLWVPTGESGEFAIKGAKSGKVENGDGCSGIKFKREKDYLVVNFSQAKGLSVLRLDNGVRVVLLDKAAAYRFWAPALTDDPNVQETETVLVHGPYLVRSASISKTTLALRGDSVEKTTLEIFAPHSVRKITWNGKEVQTSHTPYGSLKATLAAPPDIKLPALTSWRSNDSLPERLPSYDDSGPAWIEANHMTTSNPSPPATFPVLYADEYGFHNGVRLWRGYFNGSASGVFLNIQGGSAFGWSAWLNGHFLDSHLGTATTSQANKTLTFPSSILNPTENVLLIVHDDTGHDQTTGALNPRGILEARLLSNDTSSPPPEFTHWRLAGTAGGESNLDPIRGVFNEDGLFAERMGWHLPGFDDSAWTSENSATSASSALSFTGATVRFFRSVVPLNIPAGLDVSISFVLSTPTAAPKGYRAQLFVNGYQYGRYNPHIGNQVVFPVPPGILDYQGDNTIGLAVWAQTEEGAGIQVDWKVNYVADSSLSVAGFGKGLRPGWTEERLKFA.

The N-terminal stretch at 1–20 (MAHIYRLLLLLLSNLWFSTA) is a signal peptide. N-linked (GlcNAc...) asparagine glycosylation occurs at Asn-23. Tyr-90 contacts substrate. Residues Asn-99 and Asn-100 are each glycosylated (N-linked (GlcNAc...) asparagine). Positions 135, 136, and 137 each coordinate substrate. N-linked (GlcNAc...) asparagine glycosylation is present at Asn-172. Asn-195 provides a ligand contact to substrate. Glu-196 acts as the Proton donor in catalysis. A glycan (N-linked (GlcNAc...) asparagine) is linked at Asn-211. Residue Tyr-265 coordinates substrate. A disulfide bond links Cys-271 and Cys-324. Glu-308 serves as the catalytic Nucleophile. Tyr-373 contacts substrate. Asn-411, Asn-456, Asn-554, Asn-679, Asn-735, Asn-775, and Asn-821 each carry an N-linked (GlcNAc...) asparagine glycan.

The protein belongs to the glycosyl hydrolase 35 family.

It is found in the secreted. The catalysed reaction is Hydrolysis of terminal non-reducing beta-D-galactose residues in beta-D-galactosides.. Its function is as follows. Cleaves beta-linked terminal galactosyl residues from gangliosides, glycoproteins, and glycosaminoglycans. The polypeptide is Probable beta-galactosidase B (lacB) (Aspergillus fumigatus (strain CBS 144.89 / FGSC A1163 / CEA10) (Neosartorya fumigata)).